Reading from the N-terminus, the 600-residue chain is NADH-quinone oxidoreductase subunit C/D (600 aa).

The tract at residues 1–190 (MVNNMTDLTA…SPFELTKAKQ (190 aa)) is NADH dehydrogenase I subunit C. Positions 214–600 (DFMFLNLGPN…IDFVMSDVDR (387 aa)) are NADH dehydrogenase I subunit D.

It in the N-terminal section; belongs to the complex I 30 kDa subunit family. This sequence in the C-terminal section; belongs to the complex I 49 kDa subunit family. NDH-1 is composed of 13 different subunits. Subunits NuoB, CD, E, F, and G constitute the peripheral sector of the complex.

It is found in the cell inner membrane. It catalyses the reaction a quinone + NADH + 5 H(+)(in) = a quinol + NAD(+) + 4 H(+)(out). NDH-1 shuttles electrons from NADH, via FMN and iron-sulfur (Fe-S) centers, to quinones in the respiratory chain. The immediate electron acceptor for the enzyme in this species is believed to be ubiquinone. Couples the redox reaction to proton translocation (for every two electrons transferred, four hydrogen ions are translocated across the cytoplasmic membrane), and thus conserves the redox energy in a proton gradient. This chain is NADH-quinone oxidoreductase subunit C/D, found in Shigella boydii serotype 18 (strain CDC 3083-94 / BS512).